Consider the following 80-residue polypeptide: Large ribosomal subunit protein uL29 (80 aa).

The protein belongs to the universal ribosomal protein uL29 family.

The polypeptide is Large ribosomal subunit protein uL29 (rpmC) (Mycobacterium leprae (strain TN)).